Here is a 247-residue protein sequence, read N- to C-terminus: LHFPL tetraspan subfamily member 4 protein (247 aa).

Helical transmembrane passes span 22-42 (IGVL…VVFI), 97-117 (FFVL…ALFF), 127-147 (ICAW…MIFP), and 178-198 (ILAI…FVLG).

It belongs to the LHFP family. In terms of assembly, interacts with GABA(A) receptor subunits. Interacts with GABRB3. Interacts with GABRA2. Interacts with GABRG2. Interacts with GABRA1. Identified in a complex of 720 kDa composed of LHFPL4, NLGN2, GABRA1, GABRB2, GABRG2 and GABRB3. Interacts with NLGN2; leading to mutual regulation of protein level and synaptic clustering. In terms of tissue distribution, highly expressed in the brain, including the cortex, hippocampus, midbrain, olfactory bulb pona plus medulla (at protein level). Expressed in the in the cerebellar granular layer and in granular layer. Colocalized with GPHN at inhibitory synapses. Weakly expressed in heart, testis, lung, intestine, vagina, ovary and uterus.

It localises to the cell projection. The protein resides in the dendrite. It is found in the postsynaptic cell membrane. Plays a role in the regulation of inhibitory synapse formation and function by being involved in maintening gamma-aminobutyric acid receptors (GABAARs) clustering and their associated scaffold proteins at inhibitory synaptic sites. Acts in concert with NLGN2 to recruit or stabilize GABAARs. The polypeptide is LHFPL tetraspan subfamily member 4 protein (Mus musculus (Mouse)).